We begin with the raw amino-acid sequence, 276 residues long: Protein PXR1 (276 aa).

The segment at 1-23 is disordered; sequence MGLAGTKIKQRFGNDPRNTNWSN. The 47-residue stretch at 25 to 71 folds into the G-patch domain; the sequence is TSRFGHQYLAKMGWQQGSGLGLVSHALTTHVKVSIKDDNLGLGAKLH. Basic and acidic residues predominate over residues 152-172; sequence DDGKKSRKRKADESETKEDKK. The tract at residues 152–261 is disordered; the sequence is DDGKKSRKRK…SKWIKQKRAS (110 aa). Residues 173-218 show a composition bias toward basic residues; it reads TLKKHKKEKKDKKEKKEKKKKKEKKDKKDKKDKKNKKDKKDKKDKK. A compositionally biased stretch (basic and acidic residues) spans 219-228; the sequence is DKKDKIRTGS. Residues 229 to 239 show a composition bias toward polar residues; it reads DETLVSKESSA.

This sequence belongs to the PINX1 family.

It localises to the nucleus. Its subcellular location is the nucleolus. Involved in rRNA-processing at A0, A1 and A2 sites and negatively regulates telomerase. In Candida albicans (strain SC5314 / ATCC MYA-2876) (Yeast), this protein is Protein PXR1 (PXR1).